Here is a 425-residue protein sequence, read N- to C-terminus: Intermediate conductance calcium-activated potassium channel protein 4 (425 aa).

A helical membrane pass occupies residues 30–50; sequence LVLAGTGIGLMVLHAEMLWFL. The chain crosses the membrane as a helical span at residues 59-79; that stretch reads LLVKCLITLSTAFLLCLIVVF. Residues 105–121 form a helical membrane-spanning segment; sequence VAQILLELLVCGVHPVP. Residues 141 to 161 traverse the membrane as a helical segment; sequence GFLGEGEALLSLAMLLRLYLV. The chain crosses the membrane as a helical span at residues 205 to 225; sequence LLLGLTLGLWLTTAWVLSVAE. An intramembrane region (pore-forming) is located at residues 239 to 259; sequence LWLIPITFLTIGYGDVVPGTL. Residues 263 to 283 traverse the membrane as a helical segment; it reads IVCLCTGVMGVCCTALLVAVV. Residues 284–345 are calmodulin-binding; that stretch reads ARKLEFNKAE…RRHQRKMLAA (62 aa). His356 is subject to Phosphohistidine.

Belongs to the potassium channel KCNN family. KCa3.1/KCNN4 subfamily. Homodimer. Homotetramer. Heterotetramer of potassium channel proteins. Interacts with MTMR6; this interaction leads to selective dephosphorylation of PI(3)P in a lipid microdomain adjacent to KCNN4, resulting in a decrease of intermediate conductance calcium-activated potassium channel activity. Interacts (via the C-tail domain) with CALM1; the calmodulin binding is constitutive, does not require calcium and mediates calcium-dependent gating and four calmodulin molecules bind to one channel tetramer. Post-translationally, phosphorylation at His-356 by NDKB activates the intermediate conductance calcium-activated potassium channel activity, and conversely it's dephosphorylation by PHPT1 inhibits this activity.

Its subcellular location is the cell membrane. The protein resides in the cell projection. It is found in the ruffle membrane. It carries out the reaction K(+)(in) = K(+)(out). In terms of biological role, intermediate conductance calcium-activated potassium channel that mediates the voltage-independent transmembrane transfer of potassium across the cell membrane through a constitutive interaction with calmodulin which binds the intracellular calcium allowing its opening. The current is characterized by a voltage-independent activation, an intracellular calcium concentration increase-dependent activation and a single-channel conductance of about 25 picosiemens. Also presents an inwardly rectifying current, thus reducing its already small outward conductance of potassium ions, which is particularly the case when the membrane potential displays positive values, above + 20 mV. Controls calcium influx during vascular contractility by being responsible of membrane hyperpolarization induced by vasoactive factors in proliferative vascular smooth muscle cell types. Following calcium influx, the consecutive activation of KCNN4 channel leads to a hyperpolarization of the cell membrane potential and hence an increase of the electrical driving force for further calcium influx promoting sustained calcium entry in response to stimulation with chemotactic peptides. Required for maximal calcium influx and proliferation during the reactivation of naive T-cells. Plays a role in the late stages of EGF-induced macropinocytosis through activation by PI(3)P. The polypeptide is Intermediate conductance calcium-activated potassium channel protein 4 (Rattus norvegicus (Rat)).